A 486-amino-acid polypeptide reads, in one-letter code: Protein nucleotidyltransferase YdiU (486 aa).

ATP is bound by residues Gly90, Gly92, Arg93, Lys113, Asp125, Gly126, Arg176, and Arg183. Asp252 acts as the Proton acceptor in catalysis. Mg(2+) contacts are provided by Asn253 and Asp262. Asp262 is a binding site for ATP.

Belongs to the SELO family. Mg(2+) is required as a cofactor. The cofactor is Mn(2+).

It carries out the reaction L-seryl-[protein] + ATP = 3-O-(5'-adenylyl)-L-seryl-[protein] + diphosphate. The catalysed reaction is L-threonyl-[protein] + ATP = 3-O-(5'-adenylyl)-L-threonyl-[protein] + diphosphate. It catalyses the reaction L-tyrosyl-[protein] + ATP = O-(5'-adenylyl)-L-tyrosyl-[protein] + diphosphate. The enzyme catalyses L-histidyl-[protein] + UTP = N(tele)-(5'-uridylyl)-L-histidyl-[protein] + diphosphate. It carries out the reaction L-seryl-[protein] + UTP = O-(5'-uridylyl)-L-seryl-[protein] + diphosphate. The catalysed reaction is L-tyrosyl-[protein] + UTP = O-(5'-uridylyl)-L-tyrosyl-[protein] + diphosphate. Nucleotidyltransferase involved in the post-translational modification of proteins. It can catalyze the addition of adenosine monophosphate (AMP) or uridine monophosphate (UMP) to a protein, resulting in modifications known as AMPylation and UMPylation. The sequence is that of Protein nucleotidyltransferase YdiU from Pseudomonas putida (strain W619).